A 531-amino-acid polypeptide reads, in one-letter code: Zinc finger protein 837 (531 aa).

Residues Met-1–Glu-101 form a disordered region. The segment covering Ala-24 to Leu-50 has biased composition (basic and acidic residues). C2H2-type zinc fingers lie at residues Tyr-271–His-293, Tyr-299–His-321, Tyr-363–His-385, Tyr-391–His-413, Tyr-419–His-441, Tyr-447–His-469, Tyr-475–His-497, and Tyr-503–His-525.

The protein belongs to the krueppel C2H2-type zinc-finger protein family.

The protein resides in the nucleus. Functionally, may be involved in transcriptional regulation. This is Zinc finger protein 837 (ZNF837) from Homo sapiens (Human).